The sequence spans 197 residues: Probable GTP-binding protein EngB (197 aa).

Residues 22 to 197 enclose the EngB-type G domain; the sequence is TGVEVAFAGR…FKEKLDTWYQ (176 aa). GTP-binding positions include 30–37, 57–61, 75–78, 142–145, and 177–179; these read GRSNAGKS, GRTQL, DLPG, TKAD, and FSS. Mg(2+)-binding residues include Ser-37 and Thr-59.

Belongs to the TRAFAC class TrmE-Era-EngA-EngB-Septin-like GTPase superfamily. EngB GTPase family. The cofactor is Mg(2+).

Functionally, necessary for normal cell division and for the maintenance of normal septation. The chain is Probable GTP-binding protein EngB from Francisella tularensis subsp. tularensis (strain FSC 198).